Here is a 947-residue protein sequence, read N- to C-terminus: Probable outer membrane protein pmp19 (947 aa).

Positions 1–19 (MKQMRLWGFLFLSSFCQVS) are cleaved as a signal peptide. One can recognise an Autotransporter domain in the interval 672-947 (IPLQHLCVFG…NAHAGLSLSF (276 aa)).

Belongs to the PMP outer membrane protein family.

It localises to the secreted. It is found in the cell wall. Its subcellular location is the cell outer membrane. This Chlamydia pneumoniae (Chlamydophila pneumoniae) protein is Probable outer membrane protein pmp19 (pmp19).